The sequence spans 234 residues: NAD-reducing hydrogenase HoxS subunit gamma (234 aa).

The region spanning Ser2 to Glu77 is the 2Fe-2S ferredoxin-type domain. [2Fe-2S] cluster is bound by residues Cys35, Cys46, Cys49, and Cys61. Residues Glu77–Asp116 form the 4Fe-4S His(Cys)3-ligated-type domain. Residues His95, Cys97, Cys100, Cys106, Cys145, Cys148, Cys151, and Cys198 each contribute to the [4Fe-4S] cluster site.

Belongs to the complex I 75 kDa subunit family. As to quaternary structure, tetramer of an alpha and a gamma subunits (flavin-containing dimer), and a delta and a nickel-containing beta subunits (hydrogenase dimer). The cofactor is [2Fe-2S] cluster. Requires [4Fe-4S] cluster as cofactor.

Its subcellular location is the cytoplasm. It catalyses the reaction H2 + NAD(+) = NADH + H(+). Its function is as follows. Subunits alpha and gamma of HoxS constitute an NADH--oxidoreductase. This Cupriavidus necator (strain ATCC 17699 / DSM 428 / KCTC 22496 / NCIMB 10442 / H16 / Stanier 337) (Ralstonia eutropha) protein is NAD-reducing hydrogenase HoxS subunit gamma (hoxU).